The following is a 707-amino-acid chain: MSCQISCRSRRGGGGGGGGGFRGFSSGSAVVSGGSRRSNTSFSCISRHGGGRGGSGGGGFGSQSLVGLGGYKSISSSVAGNSGGYGGSSFGGSSGFGGGRGFGGGQGFGGSGGFGGGSGFGGGQGFGGGSRFGGGSGFGGGGFGGGSFGGGRFGGGPGGFGGPGGFPGGGIHEVSVNQSLLQPLDVKVDPEIQNVKSQEREQIKTLNNKFASFIDKVRFLEQQNQVLRTKWELLQQLDVGSRTTNLDPIFQAYIGMLKKQVDRLSAERTSQESELNNMQDLVEDFKKKYEDEINKRTSAENDFVTIKKDVDSCYMDKTELQARLDILAQEVNFLRTLYDAELSQLQQDVTDTNVILSMDNNRNLDLDSIIAEVQNQYEMIAHKSKAESEELYHSKYEELQVTAVKHGDSLKEIKMEISELNRTIQRLQGEISHVKKQCKGVQDSIADAEQRGEHAIKDARGKLTDLEEALQQCREDLARLLRDYQELMNTKLSLDVEIATYRKLLEGEECRMSGDFSDNVSVSITSSTISSSVASKTGFGSGGQSSGGRGSYGGRGGGGGGGSTYGSGGRSSGSRGSGSGSGGGGYSSGGGSRGGSGGGYGSGGGSRGGSGGGYGSGGGSGSGGGYSSGGGSRGGSGGGGVSSGGGSRGGSSSGGGSRGGSSSGGGGYSSGGGSRGGSSSGGAGSSSEKGGSGSGEGCGSGVTFSFR.

The tract at residues Met1–Gly20 is disordered. A head region spans residues Met1–Gln198. Asymmetric dimethylarginine is present on Arg22. Residues Ser25 and Ser28 each carry the phosphoserine modification. The segment covering Ala29–Ser38 has biased composition (low complexity). Residues Ala29–Gly59 form a disordered region. Residue Arg52 is modified to Omega-N-methylarginine. Residue Ser64 is modified to Phosphoserine. The tract at residues Glu199–Leu234 is coil 1A. One can recognise an IF rod domain in the interval Glu199 to Met512. The segment at Gln235–Tyr253 is linker 1. Positions Ile254 to Leu345 are coil 1B. Residues Gln346–Ile369 are linker 12. The tract at residues Ile370 to Glu508 is coil 2. The segment at Glu509–Arg707 is tail. The segment at Ser531–Arg707 is disordered. The segment covering Phe539–Ser700 has biased composition (gly residues). 4 positions are modified to omega-N-methylarginine: Arg555, Arg593, Arg607, and Arg675.

It belongs to the intermediate filament family. As to quaternary structure, heterotetramer of two type I and two type II keratins. Associates with KRT10. Expressed predominantly in the suprabasal layers of the plantar epidermis outside of the footpads (at protein level). Expressed in the suprabasal layers of the interfollicular epidermis of the ear, in the interscale regions distant from the hair follicles in the tail, and in the soles of the footpads (at protein level). Expressed mainly in the middle spinous and granular cells of the epidermis of adult tail, nipple and footsole skin. Also found in ear.

The protein localises to the cytoplasm. Probably contributes to terminal cornification. Associated with keratinocyte activation, proliferation and keratinization. Required for maintenance of corneocytes and keratin filaments in suprabasal keratinocytes in the epidermis of the ear, potentially via moderation of expression and localization of keratins and their partner proteins. Plays a role in the establishment of the epidermal barrier on plantar skin. The chain is Keratin, type II cytoskeletal 2 epidermal from Mus musculus (Mouse).